We begin with the raw amino-acid sequence, 131 residues long: Small ribosomal subunit protein bS6 (131 aa).

The disordered stretch occupies residues Asp94–Asp131. The segment covering Arg117–Asp131 has biased composition (basic and acidic residues).

This sequence belongs to the bacterial ribosomal protein bS6 family.

Its function is as follows. Binds together with bS18 to 16S ribosomal RNA. The polypeptide is Small ribosomal subunit protein bS6 (Psychrobacter cryohalolentis (strain ATCC BAA-1226 / DSM 17306 / VKM B-2378 / K5)).